The sequence spans 536 residues: 2,3-bisphosphoglycerate-independent phosphoglycerate mutase (536 aa).

Residues D19 and S69 each contribute to the Mn(2+) site. Catalysis depends on S69, which acts as the Phosphoserine intermediate. Substrate-binding positions include H130, 160-161 (RD), R192, R198, 262-265 (RPDR), and K335. 5 residues coordinate Mn(2+): D402, H406, D443, H444, and H461.

This sequence belongs to the BPG-independent phosphoglycerate mutase family. As to quaternary structure, monomer. It depends on Mn(2+) as a cofactor.

It carries out the reaction (2R)-2-phosphoglycerate = (2R)-3-phosphoglycerate. Its pathway is carbohydrate degradation; glycolysis; pyruvate from D-glyceraldehyde 3-phosphate: step 3/5. Functionally, catalyzes the interconversion of 2-phosphoglycerate and 3-phosphoglycerate. The protein is 2,3-bisphosphoglycerate-independent phosphoglycerate mutase of Gloeobacter violaceus (strain ATCC 29082 / PCC 7421).